The sequence spans 305 residues: Urease accessory protein UreD (305 aa).

Belongs to the UreD family. As to quaternary structure, ureD, UreF and UreG form a complex that acts as a GTP-hydrolysis-dependent molecular chaperone, activating the urease apoprotein by helping to assemble the nickel containing metallocenter of UreC. The UreE protein probably delivers the nickel.

It localises to the cytoplasm. In terms of biological role, required for maturation of urease via the functional incorporation of the urease nickel metallocenter. The sequence is that of Urease accessory protein UreD from Delftia acidovorans (strain DSM 14801 / SPH-1).